A 393-amino-acid polypeptide reads, in one-letter code: Pigment production hydroxylase (393 aa).

In terms of biological role, involved in pigment production acting as a hydroxylase that transforms indole to indoxyl, resulting in the formation of indigo. This Rhodococcus erythropolis (Arthrobacter picolinophilus) protein is Pigment production hydroxylase.